We begin with the raw amino-acid sequence, 325 residues long: MATH domain and coiled-coil domain-containing protein At3g58340 (325 aa).

Residues 6–131 (DKKFCWEIKN…NGQVMIVAEV (126 aa)) form the MATH domain. Residues 266–315 (KVDWLEKKLDHVKEKKEKEQSGLIILQGIEQQLHELMHKCEKKKSEVLSV) adopt a coiled-coil conformation.

This Arabidopsis thaliana (Mouse-ear cress) protein is MATH domain and coiled-coil domain-containing protein At3g58340.